The sequence spans 141 residues: Large ribosomal subunit protein uL11 (141 aa).

It belongs to the universal ribosomal protein uL11 family. Part of the ribosomal stalk of the 50S ribosomal subunit. Interacts with L10 and the large rRNA to form the base of the stalk. L10 forms an elongated spine to which L12 dimers bind in a sequential fashion forming a multimeric L10(L12)X complex. Post-translationally, one or more lysine residues are methylated.

Its function is as follows. Forms part of the ribosomal stalk which helps the ribosome interact with GTP-bound translation factors. The polypeptide is Large ribosomal subunit protein uL11 (Opitutus terrae (strain DSM 11246 / JCM 15787 / PB90-1)).